Here is a 196-residue protein sequence, read N- to C-terminus: Peptide methionine sulfoxide reductase MsrA 2 (196 aa).

Cysteine 36 is an active-site residue.

Belongs to the MsrA Met sulfoxide reductase family.

It carries out the reaction L-methionyl-[protein] + [thioredoxin]-disulfide + H2O = L-methionyl-(S)-S-oxide-[protein] + [thioredoxin]-dithiol. The enzyme catalyses [thioredoxin]-disulfide + L-methionine + H2O = L-methionine (S)-S-oxide + [thioredoxin]-dithiol. Functionally, has an important function as a repair enzyme for proteins that have been inactivated by oxidation. Catalyzes the reversible oxidation-reduction of methionine sulfoxide in proteins to methionine. This is Peptide methionine sulfoxide reductase MsrA 2 (msrA2) from Caulobacter vibrioides (strain ATCC 19089 / CIP 103742 / CB 15) (Caulobacter crescentus).